The sequence spans 341 residues: Elongation factor Ts (341 aa).

The segment at threonine 80–valine 83 is involved in Mg(2+) ion dislocation from EF-Tu.

It belongs to the EF-Ts family.

It localises to the cytoplasm. Associates with the EF-Tu.GDP complex and induces the exchange of GDP to GTP. It remains bound to the aminoacyl-tRNA.EF-Tu.GTP complex up to the GTP hydrolysis stage on the ribosome. The chain is Elongation factor Ts from Lactobacillus gasseri (strain ATCC 33323 / DSM 20243 / BCRC 14619 / CIP 102991 / JCM 1131 / KCTC 3163 / NCIMB 11718 / NCTC 13722 / AM63).